A 307-amino-acid chain; its full sequence is tRNA dimethylallyltransferase (307 aa).

10 to 17 provides a ligand contact to ATP; the sequence is GPTASGKS. 12-17 contributes to the substrate binding site; sequence TASGKS. Interaction with substrate tRNA regions lie at residues 35 to 38 and 159 to 163; these read DSMQ and QRLCR.

Belongs to the IPP transferase family. As to quaternary structure, monomer. Requires Mg(2+) as cofactor.

It carries out the reaction adenosine(37) in tRNA + dimethylallyl diphosphate = N(6)-dimethylallyladenosine(37) in tRNA + diphosphate. Its function is as follows. Catalyzes the transfer of a dimethylallyl group onto the adenine at position 37 in tRNAs that read codons beginning with uridine, leading to the formation of N6-(dimethylallyl)adenosine (i(6)A). The sequence is that of tRNA dimethylallyltransferase from Phenylobacterium zucineum (strain HLK1).